We begin with the raw amino-acid sequence, 944 residues long: Valine--tRNA ligase (944 aa).

A 'HIGH' region motif is present at residues P43–H53. A 'KMSKS' region motif is present at residues K550–S554. Position 553 (K553) interacts with ATP. Residues L878–A942 adopt a coiled-coil conformation.

It belongs to the class-I aminoacyl-tRNA synthetase family. ValS type 1 subfamily. As to quaternary structure, monomer.

It localises to the cytoplasm. It carries out the reaction tRNA(Val) + L-valine + ATP = L-valyl-tRNA(Val) + AMP + diphosphate. In terms of biological role, catalyzes the attachment of valine to tRNA(Val). As ValRS can inadvertently accommodate and process structurally similar amino acids such as threonine, to avoid such errors, it has a 'posttransfer' editing activity that hydrolyzes mischarged Thr-tRNA(Val) in a tRNA-dependent manner. The protein is Valine--tRNA ligase of Xanthomonas axonopodis pv. citri (strain 306).